We begin with the raw amino-acid sequence, 508 residues long: MAWLVLSGILLCMLGAGLGTSDLEDVLPPAPHNCPDICICAADVLSCAGRGLQDLPVALPTTAAELDLSHNALKRLHPGWLAPLSRLRALHLGYNKLEVLGHGAFTNASGLRTLDLSSNMLRMLHTHDLDGLEELEKLLLFNNSLMHLDLDAFQGLRMLSHLYLSCNELSSFSFNHLHGLGLTRLRTLDLSSNWLKHISIPELAALPTYLKNRLYLHNNPLPCDCSLYHLLRRWHQRGLSALHDFEREYTCLVFKVSESRVRFFEHSRVFKNCSVAAAPGLELPEEQLHAQVGQSLRLFCNTSVPATRVAWVSPKNELLVAPASQDGSIAVLADGSLAIGRVQEQHAGVFVCLASGPRLHHNQTLEYNVSVQKARPEPETFNTGFTTLLGCIVGLVLVLLYLFAPPCRGCCHCCQRACRNRCWPRASSPLQELSAQSSMLSTTPPDAPSRKASVHKHVVFLEPGKKGLNGRVQLAVAEDFDLCNPMGLQLKAGSESASSTGSEGLVMS.

Residues 1–19 form the signal peptide; sequence MAWLVLSGILLCMLGAGLG. The Extracellular segment spans residues 20–383; it reads TSDLEDVLPP…ARPEPETFNT (364 aa). The 37-residue stretch at 25–61 folds into the LRRNT domain; the sequence is DVLPPAPHNCPDICICAADVLSCAGRGLQDLPVALPT. Disulfide bonds link cysteine 34/cysteine 40 and cysteine 38/cysteine 47. 6 LRR repeats span residues 62-83, 86-107, 110-133, 134-155, 158-178, and 184-207; these read TAAE…WLAP, RLRA…AFTN, GLRT…DGLE, ELEK…AFQG, MLSH…NHLH, and RLRT…AALP. The N-linked (GlcNAc...) asparagine glycan is linked to asparagine 107. Asparagine 142 is a glycosylation site (N-linked (GlcNAc...) asparagine). The LRRCT domain maps to 219 to 275; that stretch reads NPLPCDCSLYHLLRRWHQRGLSALHDFEREYTCLVFKVSESRVRFFEHSRVFKNCSV. 3 cysteine pairs are disulfide-bonded: cysteine 223–cysteine 251, cysteine 225–cysteine 273, and cysteine 300–cysteine 352. 4 N-linked (GlcNAc...) asparagine glycosylation sites follow: asparagine 272, asparagine 301, asparagine 362, and asparagine 368. Residues 279–370 form the Ig-like C2-type domain; that stretch reads PGLELPEEQL…HNQTLEYNVS (92 aa). A helical membrane pass occupies residues 384–404; that stretch reads GFTTLLGCIVGLVLVLLYLFA. Residues 405–508 lie on the Cytoplasmic side of the membrane; the sequence is PPCRGCCHCC…STGSEGLVMS (104 aa).

The protein belongs to the immunoglobulin superfamily. AMIGO family. In terms of assembly, binds AMIGO1 or AMIGO2. Ubiquitous.

Its subcellular location is the membrane. May mediate heterophilic cell-cell interaction. May contribute to signal transduction through its intracellular domain. This Mus musculus (Mouse) protein is Amphoterin-induced protein 3.